The primary structure comprises 618 residues: Rho guanine nucleotide exchange factor 25 (618 aa).

Disordered stretches follow at residues 26-63 and 169-193; these read CAVP…REPE and GPGD…EEQK. Residues 199 to 375 enclose the DH domain; the sequence is RSMFVLGELV…CFVPKRCNDM (177 aa). Positions 317–338 are important for binding to Rho GTPases; sequence LGHRLQLNDLLIKPVQRIMKYQ. A PH domain is found at 387 to 505; it reads KLTAQGKLLG…WIKQVAQILE (119 aa). The sufficient to bind activated GNAQ stretch occupies residues 506 to 532; the sequence is SQRDFLNALQSPIEYQRRESQTNSLGR. Disordered regions lie at residues 521–556 and 584–604; these read QRRE…SMHT and ALSD…VNTP. Residues 584-593 are compositionally biased toward polar residues; that stretch reads ALSDTPQTPH.

As to quaternary structure, interacts with activated GNAQ and GNA11. Interacts (via the DH domain) with POPDC1 (via the C-terminus cytoplasmic tail). Interacts with RHOA, CDC42 and RAC1. As to expression, highly expressed in excitable tissues, such as brain, heart and muscle. Elevated expression in hippocampus and cerebellum.

It localises to the cytoplasm. The protein localises to the myofibril. The protein resides in the sarcomere. It is found in the cell membrane. In terms of biological role, may play a role in actin cytoskeleton reorganization in different tissues since its activation induces formation of actin stress fibers. It works as a guanine nucleotide exchange factor for Rho family of small GTPases. Links specifically G alpha q/11-coupled receptors to RHOA activation. May be an important regulator of processes involved in axon and dendrite formation. In neurons seems to be an exchange factor primarily for RAC1. Involved in skeletal myogenesis. The polypeptide is Rho guanine nucleotide exchange factor 25 (Arhgef25) (Mus musculus (Mouse)).